Here is a 274-residue protein sequence, read N- to C-terminus: Shikimate dehydrogenase (NADP(+)) (274 aa).

Residues 14–16 and threonine 61 contribute to the shikimate site; that span reads SQS. Lysine 65 acts as the Proton acceptor in catalysis. Positions 86 and 102 each coordinate shikimate. Residues 128 to 132, 151 to 156, and leucine 215 each bind NADP(+); these read GAGGA and NRTVEK. Residue tyrosine 217 participates in shikimate binding. Residue glycine 239 coordinates NADP(+).

It belongs to the shikimate dehydrogenase family. Homodimer.

The enzyme catalyses shikimate + NADP(+) = 3-dehydroshikimate + NADPH + H(+). It functions in the pathway metabolic intermediate biosynthesis; chorismate biosynthesis; chorismate from D-erythrose 4-phosphate and phosphoenolpyruvate: step 4/7. Involved in the biosynthesis of the chorismate, which leads to the biosynthesis of aromatic amino acids. Catalyzes the reversible NADPH linked reduction of 3-dehydroshikimate (DHSA) to yield shikimate (SA). This chain is Shikimate dehydrogenase (NADP(+)), found in Proteus mirabilis (strain HI4320).